The chain runs to 432 residues: MGVISDAYRLKYTFGVDFGTSYVKYGPITLNEPKMVQTRGLFLRDLPESVKMRIPPDVLARGLVVGDEEVRKYLSSVRDVQRNLKYPLKDGVARRDDEEAWRVLKELARYTLAQFPVSDPEFAGWLVAVALSALAPDYMYKAIFDIYDELASEFKIYAVTILPQPLAVAIAENAVNCVIVEGGHGNIQVAPISFALIREGLVALNRGGAEANAITREILKDIGYSDIAREEYAVEVVKRAVGLVPRRLKEAIRAAKSDPDRFVTKVRLSPVVEVEIPREYAWTRFLIGEIVFDPNHEEIKSYIEQSRLRIENAVIGDVTLYGEMDVASAIITSLRNVSVEIQERVASQIILSGGAFSWRVPPGMEDVAADSVTRVKIALEEKSPALASKVEVRLVSEPQYSVWRGAVIYGYALPLSLEWSDTTREGWRFPRR.

ATP-binding positions include T20–K24, G182–H184, E235–R239, G354–W358, and Q399.

Belongs to the actin family. In terms of assembly, monomer. The crenactin monomers polymerize into right-handed helical filaments, with 8 subunits per complete turn of the helix. Forms single-stranded filaments under high salt concentrations and double-stranded filaments under low salt concentrations. Interacts with arcadin-1 and arcadin-2.

It is found in the cytoplasm. It localises to the cytoskeleton. It carries out the reaction ATP + H2O = ADP + phosphate + H(+). With respect to regulation, crenactin polymerization is inhibited by interaction with arcadin-2. Also significantly inhibited by elevated antibiotic A22 concentrations. Forms the backbone of an actin-like archaeal cytoskeleton, which is involved in cell shape determination. Has ATPase activity. Shows highest activity towards ATP or GTP as nucleotide, and only residual activity on UTP, CTP and dNTPs. The protein is Crenactin of Pyrobaculum calidifontis (strain DSM 21063 / JCM 11548 / VA1).